Consider the following 143-residue polypeptide: MFMGEYSHTLDTKSRLIIPAKFRNQLGDQFIITKWMEKSLRAMPMAVWEKLQEQLNQLPLGKKDARAFRRFVMAGALEAEFDKQGRIVVPNNLREYASLEKSVVVTGVGDSFEIWSAENWSAYTAETADDFDNIAEGLVDFDL.

SpoVT-AbrB domains follow at residues 5-47 (EYSH…PMAV) and 76-119 (ALEA…SAEN).

This sequence belongs to the MraZ family. Forms oligomers.

It localises to the cytoplasm. The protein resides in the nucleoid. This chain is Transcriptional regulator MraZ, found in Leuconostoc mesenteroides subsp. mesenteroides (strain ATCC 8293 / DSM 20343 / BCRC 11652 / CCM 1803 / JCM 6124 / NCDO 523 / NBRC 100496 / NCIMB 8023 / NCTC 12954 / NRRL B-1118 / 37Y).